The following is a 223-amino-acid chain: UPF0441 protein YgiB (223 aa).

Over residues 178-195 (TVPKTAMAPKPATTTTVT) the composition is skewed to low complexity. The interval 178-223 (TVPKTAMAPKPATTTTVTRGGFGESVAKQSTMQRSATGTSSRSMGG) is disordered. Over residues 204 to 223 (AKQSTMQRSATGTSSRSMGG) the composition is skewed to polar residues.

The protein belongs to the UPF0441 family.

This is UPF0441 protein YgiB from Shigella boydii serotype 18 (strain CDC 3083-94 / BS512).